We begin with the raw amino-acid sequence, 479 residues long: Ribulose bisphosphate carboxylase large chain (479 aa).

The propeptide occupies Met1–Ser2. Residues Asn123 and Thr173 each contribute to the substrate site. The active-site Proton acceptor is the Lys175. Residue Lys177 participates in substrate binding. Mg(2+) contacts are provided by Lys201, Asp203, and Glu204. Lys201 carries the N6-carboxylysine modification. A Phosphoserine modification is found at Ser208. His294 (proton acceptor) is an active-site residue. Substrate is bound by residues Arg295 and His327. Phosphothreonine is present on Thr330. Ser379 provides a ligand contact to substrate.

It belongs to the RuBisCO large chain family. Type I subfamily. As to quaternary structure, heterohexadecamer of 8 large chains and 8 small chains; disulfide-linked. The disulfide link is formed within the large subunit homodimers. It depends on Mg(2+) as a cofactor. Post-translationally, the disulfide bond which can form in the large chain dimeric partners within the hexadecamer appears to be associated with oxidative stress and protein turnover.

Its subcellular location is the plastid. The protein resides in the chloroplast. The enzyme catalyses 2 (2R)-3-phosphoglycerate + 2 H(+) = D-ribulose 1,5-bisphosphate + CO2 + H2O. It carries out the reaction D-ribulose 1,5-bisphosphate + O2 = 2-phosphoglycolate + (2R)-3-phosphoglycerate + 2 H(+). Functionally, ruBisCO catalyzes two reactions: the carboxylation of D-ribulose 1,5-bisphosphate, the primary event in carbon dioxide fixation, as well as the oxidative fragmentation of the pentose substrate in the photorespiration process. Both reactions occur simultaneously and in competition at the same active site. In Nasturtium officinale (Watercress), this protein is Ribulose bisphosphate carboxylase large chain.